Reading from the N-terminus, the 240-residue chain is Small ribosomal subunit protein uS2c (240 aa).

The protein belongs to the universal ribosomal protein uS2 family.

It localises to the plastid. It is found in the chloroplast. The polypeptide is Small ribosomal subunit protein uS2c (rps2) (Cycas taitungensis (Prince sago)).